The sequence spans 217 residues: NADH dehydrogenase (ubiquinone) 23 kDa subunit (217 aa).

The transit peptide at 1–26 (MSLTMRIFTASRNGQRLFGSHGARLL) directs the protein to the mitochondrion. 2 consecutive 4Fe-4S ferredoxin-type domains span residues 109 to 138 (RRYPSGEERCIACKLCEAICPAQAITIEAE) and 148 to 177 (TRYDIDMTKCIYCGFCQEACPVDAIVEGPN). C118, C121, C124, C128, C157, C160, C163, and C167 together coordinate [4Fe-4S] cluster.

Belongs to the complex I 23 kDa subunit family. In terms of assembly, part of the mitochondrial membrane respiratory chain NADH dehydrogenase (Complex I). This is a component of the iron-sulfur (IP) fragment of the enzyme. The cofactor is [4Fe-4S] cluster. As to expression, expressed in muscles (at protein level).

It is found in the mitochondrion. The catalysed reaction is a ubiquinone + NADH + 5 H(+)(in) = a ubiquinol + NAD(+) + 4 H(+)(out). Functionally, core subunit of the mitochondrial membrane respiratory chain NADH dehydrogenase (Complex I) that is believed to belong to the minimal assembly required for catalysis. Complex I functions in the transfer of electrons from NADH to the respiratory chain. The immediate electron acceptor for the enzyme is believed to be ubiquinone. This Drosophila melanogaster (Fruit fly) protein is NADH dehydrogenase (ubiquinone) 23 kDa subunit.